A 479-amino-acid chain; its full sequence is Probable polyamine transporter At3g19553 (479 aa).

The next 12 membrane-spanning stretches (helical) occupy residues 22-42 (LTLL…PFGV), 53-73 (LLAL…EALV), 86-106 (GYVV…EGFW), 130-150 (FPVL…TFSL), 160-180 (IVGF…VVMA), 236-256 (ALFG…MAGT), 275-295 (VGML…AAMS), 304-324 (MSSD…PAFF), 332-352 (TPTI…WMSF), 355-375 (IIEF…AAFV), 395-415 (FGVS…MVLA), and 420-440 (FLIS…LTLV). Positions 454–479 (RPVSGVSSESQLDEEHGDESAASLLP) are disordered.

This sequence belongs to the amino acid-polyamine-organocation (APC) superfamily. Polyamine:cation symporter (PHS) (TC 2.A.3.12) family.

The protein localises to the cell membrane. Functionally, probable cell membrane polyamine/proton symporter involved in the polyamine uptake in cells. This is Probable polyamine transporter At3g19553 from Arabidopsis thaliana (Mouse-ear cress).